The following is a 395-amino-acid chain: Fractalkine (395 aa).

A signal peptide spans 1–24 (MAPSPLAWLLRLAAFFHLCTLLPG). Residues 25–100 (QHLGMTKCEI…HQAAALTKNG (76 aa)) are chemokine and involved in interaction with ITGAV:ITGB3 and ITGA4:ITGB1. Topologically, residues 25–336 (QHLGMTKCEI…TPVPDTQAAT (312 aa)) are extracellular. Disulfide bonds link Cys32–Cys58 and Cys36–Cys74. Residues 101–336 (GKFEKRVDNV…TPVPDTQAAT (236 aa)) are mucin-like stalk. Polar residues-rich tracts occupy residues 148-172 (ARGT…TSEA) and 201-210 (AVYQSGSSSW). 2 disordered regions span residues 148 to 180 (ARGT…LTAK) and 201 to 305 (AVYQ…SGSQ). The segment covering 218-236 (SPSTTAPSPQVSTTSPSTP) has biased composition (low complexity). The helical transmembrane segment at 337–357 (RRQAVGLLAFLGLLFCLGVAM) threads the bilayer. The Cytoplasmic segment spans residues 358–395 (FAYQSLQGCPRKMAGEMVEGLRYVPRSCGSNSYVLVPV).

Belongs to the intercrine delta family. In terms of assembly, monomer. Forms a ternary complex with CX3CR1 and ITGAV:ITGB3 or ITGA4:ITGB1. Post-translationally, a soluble short 80 kDa form may be released by proteolytic cleavage from the long membrane-anchored form. Highest levels in brain. Lower levels in kidney, heart and lung. Also found in skeletal muscle and testis. Highly expressed in lesional smooth muscle cells, but not macrophages. Low levels of ABCD-3 mRNA were also found in anti-CD40-stimulated splenic B-cells, but not in resting B-cells. Also expressed in dendritic cells.

It is found in the cell membrane. The protein resides in the secreted. Its function is as follows. Chemokine that acts as a ligand for both CX3CR1 and integrins ITGAV:ITGB3 and ITGA4:ITGB1. The CX3CR1-CX3CL1 signaling exerts distinct functions in different tissue compartments, such as immune response, inflammation, cell adhesion and chemotaxis. Regulates leukocyte adhesion and migration processes at the endothelium. Can activate integrins in both a CX3CR1-dependent and CX3CR1-independent manner. In the presence of CX3CR1, activates integrins by binding to the classical ligand-binding site (site 1) in integrins. In the absence of CX3CR1, binds to a second site (site 2) in integrins which is distinct from site 1 and enhances the binding of other integrin ligands to site 1. In terms of biological role, the soluble form is chemotactic for T-cells and monocytes, but not for neutrophils. Functionally, the membrane-bound form promotes adhesion of those leukocytes to endothelial cells. This chain is Fractalkine, found in Mus musculus (Mouse).